The following is a 258-amino-acid chain: Deoxyribose-phosphate aldolase (258 aa).

Aspartate 102 serves as the catalytic Proton donor/acceptor. Lysine 165 acts as the Schiff-base intermediate with acetaldehyde in catalysis. Catalysis depends on lysine 199, which acts as the Proton donor/acceptor.

This sequence belongs to the DeoC/FbaB aldolase family. DeoC type 2 subfamily.

The protein localises to the cytoplasm. It carries out the reaction 2-deoxy-D-ribose 5-phosphate = D-glyceraldehyde 3-phosphate + acetaldehyde. It functions in the pathway carbohydrate degradation; 2-deoxy-D-ribose 1-phosphate degradation; D-glyceraldehyde 3-phosphate and acetaldehyde from 2-deoxy-alpha-D-ribose 1-phosphate: step 2/2. Functionally, catalyzes a reversible aldol reaction between acetaldehyde and D-glyceraldehyde 3-phosphate to generate 2-deoxy-D-ribose 5-phosphate. The chain is Deoxyribose-phosphate aldolase from Aliivibrio fischeri (strain MJ11) (Vibrio fischeri).